Here is a 277-residue protein sequence, read N- to C-terminus: Large ribosomal subunit protein uL2 (277 aa).

Disordered stretches follow at residues 36–58 and 219–277; these read PLHK…GGGH and TVRG…RKNK. Residues 258–277 show a composition bias toward basic residues; sequence KTRKKKNKSDKFIVRRRKNK.

Belongs to the universal ribosomal protein uL2 family. Part of the 50S ribosomal subunit. Forms a bridge to the 30S subunit in the 70S ribosome.

Its function is as follows. One of the primary rRNA binding proteins. Required for association of the 30S and 50S subunits to form the 70S ribosome, for tRNA binding and peptide bond formation. It has been suggested to have peptidyltransferase activity; this is somewhat controversial. Makes several contacts with the 16S rRNA in the 70S ribosome. This is Large ribosomal subunit protein uL2 from Bacillus velezensis (strain DSM 23117 / BGSC 10A6 / LMG 26770 / FZB42) (Bacillus amyloliquefaciens subsp. plantarum).